The primary structure comprises 313 residues: 4-diphosphocytidyl-2-C-methyl-D-erythritol kinase (313 aa).

The active site involves Lys29. Residue 113–123 (PMGGGVGGGSS) participates in ATP binding. Residue Asp155 is part of the active site.

This sequence belongs to the GHMP kinase family. IspE subfamily.

It catalyses the reaction 4-CDP-2-C-methyl-D-erythritol + ATP = 4-CDP-2-C-methyl-D-erythritol 2-phosphate + ADP + H(+). The protein operates within isoprenoid biosynthesis; isopentenyl diphosphate biosynthesis via DXP pathway; isopentenyl diphosphate from 1-deoxy-D-xylulose 5-phosphate: step 3/6. Functionally, catalyzes the phosphorylation of the position 2 hydroxy group of 4-diphosphocytidyl-2C-methyl-D-erythritol. This chain is 4-diphosphocytidyl-2-C-methyl-D-erythritol kinase, found in Haemophilus influenzae (strain 86-028NP).